Consider the following 266-residue polypeptide: Apolipoprotein A-I (266 aa).

The signal sequence occupies residues 1 to 18; it reads MKAVVLTLAVLFLTGSQA. 2 consecutive repeat copies span residues 67–88 and 89–110. Residues 67-266 are 10 X approximate tandem repeats; sequence LKLLDNWDSL…DEATKKLNSQ (200 aa). Methionine sulfoxide is present on Met109. The 3; half-length repeat unit spans residues 111–121; sequence KDLEEVKKKVQ. Repeat copies occupy residues 122–143, 144–165, 166–187, 188–209, and 210–231. Residues 232 to 242 form a 9; half-length repeat; it reads PALEDLRQGLL. Repeat unit 10 spans residues 243–266; the sequence is PVLENFRVSLLAAVDEATKKLNSQ.

Belongs to the apolipoprotein A1/A4/E family. As to quaternary structure, homodimer. Interacts with APOA1BP and CLU. Component of a sperm activating protein complex (SPAP), consisting of APOA1, an immunoglobulin heavy chain, an immunoglobulin light chain and albumin. Interacts with NDRG1. Interacts with SCGB3A2. Interacts with NAXE and YJEFN3. Post-translationally, glycosylated. Palmitoylated. In terms of processing, phosphorylation sites are present in the extracellular medium.

The protein localises to the secreted. Functionally, participates in the reverse transport of cholesterol from tissues to the liver for excretion by promoting cholesterol efflux from tissues and by acting as a cofactor for the lecithin cholesterol acyltransferase (LCAT). As part of the SPAP complex, activates spermatozoa motility. In Leptonychotes weddellii (Weddell seal), this protein is Apolipoprotein A-I (APOA1).